The primary structure comprises 84 residues: Small ribosomal subunit protein uS15 (84 aa).

This sequence belongs to the universal ribosomal protein uS15 family. In terms of assembly, part of the 30S ribosomal subunit. Forms a bridge to the 50S subunit in the 70S ribosome, contacting the 23S rRNA.

Functionally, one of the primary rRNA binding proteins, it binds directly to 16S rRNA where it helps nucleate assembly of the platform of the 30S subunit by binding and bridging several RNA helices of the 16S rRNA. Forms an intersubunit bridge (bridge B4) with the 23S rRNA of the 50S subunit in the ribosome. The protein is Small ribosomal subunit protein uS15 of Thermosipho africanus (strain TCF52B).